The following is a 419-amino-acid chain: UDP-N-acetylglucosamine 1-carboxyvinyltransferase (419 aa).

22–23 (KN) serves as a coordination point for phosphoenolpyruvate. R93 is a binding site for UDP-N-acetyl-alpha-D-glucosamine. The active-site Proton donor is C117. The residue at position 117 (C117) is a 2-(S-cysteinyl)pyruvic acid O-phosphothioketal. UDP-N-acetyl-alpha-D-glucosamine contacts are provided by residues 122 to 126 (RPVDQ), D305, and I327.

It belongs to the EPSP synthase family. MurA subfamily.

It is found in the cytoplasm. It carries out the reaction phosphoenolpyruvate + UDP-N-acetyl-alpha-D-glucosamine = UDP-N-acetyl-3-O-(1-carboxyvinyl)-alpha-D-glucosamine + phosphate. Its pathway is cell wall biogenesis; peptidoglycan biosynthesis. Its function is as follows. Cell wall formation. Adds enolpyruvyl to UDP-N-acetylglucosamine. This chain is UDP-N-acetylglucosamine 1-carboxyvinyltransferase, found in Dichelobacter nodosus (strain VCS1703A).